Consider the following 84-residue polypeptide: Large ribosomal subunit protein uL23 (84 aa).

Belongs to the universal ribosomal protein uL23 family. Part of the 50S ribosomal subunit. Contacts protein L29.

Functionally, binds to 23S rRNA. One of the proteins that surrounds the polypeptide exit tunnel on the outside of the ribosome. The sequence is that of Large ribosomal subunit protein uL23 from Haloquadratum walsbyi (strain DSM 16790 / HBSQ001).